Reading from the N-terminus, the 91-residue chain is Probable Fe(2+)-trafficking protein (91 aa).

Belongs to the Fe(2+)-trafficking protein family.

Its function is as follows. Could be a mediator in iron transactions between iron acquisition and iron-requiring processes, such as synthesis and/or repair of Fe-S clusters in biosynthetic enzymes. The chain is Probable Fe(2+)-trafficking protein from Glaesserella parasuis serovar 5 (strain SH0165) (Haemophilus parasuis).